The following is a 107-amino-acid chain: HTH-type transcriptional regulator Rv2034 (107 aa).

The 93-residue stretch at 1–93 (MSTYRSPDRA…DLDRFWTRAL (93 aa)) folds into the HTH arsR-type domain. The H-T-H motif DNA-binding region spans 33 to 56 (VGELARDLPVSRPAVSQHLKVLKT).

In terms of assembly, homodimer.

DNA-binding ability is not susceptible to zinc, nickel, cobalt, cadmium, lead, copper and manganese ions. In terms of biological role, involved in the regulation of lipid metabolism and hypoxic response. Positively regulates transcription of various genes, such as phoP, groEL2 and dosR. Negatively regulates its own transcription. Acts by binding to a specific palindromic sequence motif in promoter regions. This Mycobacterium tuberculosis (strain ATCC 25618 / H37Rv) protein is HTH-type transcriptional regulator Rv2034.